The following is a 452-amino-acid chain: Tripartite motif-containing protein 51 (452 aa).

The RING-type zinc-finger motif lies at 15–56 (CPICMNYFLDPVTIDCGHSFCRPCLYLNWQDTAVLAQCSECK). The B box-type zinc finger occupies 88–129 (SEEQICGMHRETKKMFCEVDKSLLCLPCSNSQEHRNHIHCPI). The Zn(2+) site is built by C93, H96, C115, and H121. Positions 269 to 452 (ELSAGPITGL…LRPIFCCSHF (184 aa)) constitute a B30.2/SPRY domain.

Belongs to the TRIM/RBCC family.

In Homo sapiens (Human), this protein is Tripartite motif-containing protein 51 (TRIM51).